Reading from the N-terminus, the 429-residue chain is Gamma-glutamyl phosphate reductase (429 aa).

Belongs to the gamma-glutamyl phosphate reductase family.

The protein resides in the cytoplasm. The catalysed reaction is L-glutamate 5-semialdehyde + phosphate + NADP(+) = L-glutamyl 5-phosphate + NADPH + H(+). Its pathway is amino-acid biosynthesis; L-proline biosynthesis; L-glutamate 5-semialdehyde from L-glutamate: step 2/2. Catalyzes the NADPH-dependent reduction of L-glutamate 5-phosphate into L-glutamate 5-semialdehyde and phosphate. The product spontaneously undergoes cyclization to form 1-pyrroline-5-carboxylate. The polypeptide is Gamma-glutamyl phosphate reductase (Bradyrhizobium sp. (strain BTAi1 / ATCC BAA-1182)).